The sequence spans 92 residues: Costars family protein ST45-2 (92 aa).

Methionine 1 carries the post-translational modification N-acetylmethionine.

This sequence belongs to the costars family.

This chain is Costars family protein ST45-2, found in Eutrema halophilum (Salt cress).